A 216-amino-acid chain; its full sequence is Small ribosomal subunit protein uS3 (216 aa).

The region spanning L20–H91 is the KH type-2 domain.

It belongs to the universal ribosomal protein uS3 family.

This chain is Small ribosomal subunit protein uS3 (RPS3), found in Encephalitozoon cuniculi (strain GB-M1) (Microsporidian parasite).